Reading from the N-terminus, the 877-residue chain is Alpha-glucosidase (877 aa).

A signal peptide spans 1–23 (MATVGVLLLCLCLCLFAPRLCSS). A disordered region spans residues 89–115 (VPQDIIPRPAPGDVLHDAPPASSAPLQ). Residues asparagine 191, asparagine 298, asparagine 338, and asparagine 391 are each glycosylated (N-linked (GlcNAc...) asparagine). Residues aspartate 437 and glutamate 440 contribute to the active site. N-linked (GlcNAc...) asparagine glycosylation occurs at asparagine 471. Aspartate 534 functions as the Proton donor in the catalytic mechanism. N-linked (GlcNAc...) asparagine glycosylation occurs at asparagine 570.

It belongs to the glycosyl hydrolase 31 family. High levels seen in the aleurone and scutellum after germination, while low levels are found in developing seeds.

It catalyses the reaction Hydrolysis of terminal, non-reducing (1-&gt;4)-linked alpha-D-glucose residues with release of alpha-D-glucose.. This is Alpha-glucosidase from Hordeum vulgare (Barley).